We begin with the raw amino-acid sequence, 248 residues long: Probable transcriptional regulatory protein Smed_2641 (248 aa).

The protein belongs to the TACO1 family.

Its subcellular location is the cytoplasm. This chain is Probable transcriptional regulatory protein Smed_2641, found in Sinorhizobium medicae (strain WSM419) (Ensifer medicae).